Consider the following 78-residue polypeptide: Delta-conotoxin-like TxMKLT1-0111 (78 aa).

The N-terminal stretch at 1–22 (MKLTCMMIVAVLFLTAWTFATA) is a signal peptide. A propeptide spanning residues 23 to 49 (DDSGNGLENLFSNAHHQMKNPEASKLN) is cleaved from the precursor. 3 disulfide bridges follow: Cys53/Cys68, Cys60/Cys72, and Cys67/Cys77.

This sequence belongs to the conotoxin O1 superfamily. As to expression, expressed by the venom duct.

The protein resides in the secreted. Functionally, delta-conotoxins bind to site 6 of voltage-gated sodium channels (Nav) and inhibit the inactivation process. The polypeptide is Delta-conotoxin-like TxMKLT1-0111 (Conus textile (Cloth-of-gold cone)).